Consider the following 131-residue polypeptide: Profilin-4 (131 aa).

Belongs to the profilin family. As to quaternary structure, occurs in many kinds of cells as a complex with monomeric actin in a 1:1 ratio.

It localises to the cytoplasm. The protein localises to the cytoskeleton. Its function is as follows. Binds to actin and affects the structure of the cytoskeleton. At high concentrations, profilin prevents the polymerization of actin, whereas it enhances it at low concentrations. By binding to PIP2, it inhibits the formation of IP3 and DG. This Hevea brasiliensis (Para rubber tree) protein is Profilin-4.